Consider the following 307-residue polypeptide: Protease HtpX homolog 1 (307 aa).

2 helical membrane-spanning segments follow: residues 7–27 and 38–60; these read LKTL…IITY and IFTA…YLVG. His-133 is a binding site for Zn(2+). The active site involves Glu-134. Residue His-137 coordinates Zn(2+). 2 helical membrane passes run 145 to 165 and 180 to 200; these read IGMA…FLLF and LILG…TFLL. Glu-212 provides a ligand contact to Zn(2+).

Belongs to the peptidase M48B family. It depends on Zn(2+) as a cofactor.

The protein localises to the cell membrane. The sequence is that of Protease HtpX homolog 1 from Sulfolobus acidocaldarius (strain ATCC 33909 / DSM 639 / JCM 8929 / NBRC 15157 / NCIMB 11770).